We begin with the raw amino-acid sequence, 205 residues long: Variable small protein 11 (205 aa).

Positions 1–18 are cleaved as a signal peptide; it reads MRKRISAIIMTLFMVFMS. C19 carries the N-palmitoyl cysteine lipid modification. Residue C19 is the site of S-diacylglycerol cysteine attachment.

It belongs to the variable small protein (Vsp) family.

The protein resides in the cell outer membrane. In terms of biological role, the Vlp and Vsp proteins are antigenically distinct proteins, only one vlp or vsp gene is transcriptionally active at any one time. Switching between these genes is a mechanism of host immune response evasion. The protein is Variable small protein 11 of Borrelia hermsii.